The following is a 491-amino-acid chain: Argininosuccinate lyase (491 aa).

Belongs to the lyase 1 family. Argininosuccinate lyase subfamily.

It is found in the cytoplasm. The enzyme catalyses 2-(N(omega)-L-arginino)succinate = fumarate + L-arginine. The protein operates within amino-acid biosynthesis; L-arginine biosynthesis; L-arginine from L-ornithine and carbamoyl phosphate: step 3/3. In Methanosarcina mazei (strain ATCC BAA-159 / DSM 3647 / Goe1 / Go1 / JCM 11833 / OCM 88) (Methanosarcina frisia), this protein is Argininosuccinate lyase.